Here is a 70-residue protein sequence, read N- to C-terminus: uncharacterized protein (70 aa).

This is an uncharacterized protein from Bacillus subtilis (strain 168).